The primary structure comprises 146 residues: Large ribosomal subunit protein uL15 (146 aa).

Residues 1-56 are disordered; the sequence is MKLHELKAAEGANKASKRVGRGTGSGLGKTSGKGQNGQNSRSGGGVRPGFEGGQMP. Gly residues-rich tracts occupy residues 21–35 and 42–52; these read RGTG…GKGQ and SGGGVRPGFEG.

This sequence belongs to the universal ribosomal protein uL15 family. In terms of assembly, part of the 50S ribosomal subunit.

Functionally, binds to the 23S rRNA. The protein is Large ribosomal subunit protein uL15 of Clostridium botulinum (strain Langeland / NCTC 10281 / Type F).